The following is a 631-amino-acid chain: Mercuric reductase (631 aa).

HMA domains lie at 2–66 and 81–145; these read KKYR…YHPG and KKYR…YQPG. The a metal cation site is built by C13, C16, C92, and C95. A181, G201, and T206 together coordinate FAD. C207 and C212 form a disulfide bridge. FAD-binding residues include K216, D472, and V480. Hg(2+) contacts are provided by C628 and C629.

This sequence belongs to the class-I pyridine nucleotide-disulfide oxidoreductase family. In terms of assembly, homodimer. It depends on FAD as a cofactor.

It catalyses the reaction Hg + NADP(+) + H(+) = Hg(2+) + NADPH. Resistance to Hg(2+) in bacteria appears to be governed by a specialized system which includes mercuric reductase. MerA protein is responsible for volatilizing mercury as Hg(0). This chain is Mercuric reductase (merA), found in Bacillus cereus.